The chain runs to 141 residues: Nucleoside diphosphate kinase (141 aa).

ATP contacts are provided by Lys9, Phe57, Arg85, Thr91, Arg102, and Asn112. Residue His115 is the Pros-phosphohistidine intermediate of the active site.

It belongs to the NDK family. As to quaternary structure, homotetramer. The cofactor is Mg(2+).

The protein localises to the cytoplasm. It catalyses the reaction a 2'-deoxyribonucleoside 5'-diphosphate + ATP = a 2'-deoxyribonucleoside 5'-triphosphate + ADP. The catalysed reaction is a ribonucleoside 5'-diphosphate + ATP = a ribonucleoside 5'-triphosphate + ADP. Functionally, major role in the synthesis of nucleoside triphosphates other than ATP. The ATP gamma phosphate is transferred to the NDP beta phosphate via a ping-pong mechanism, using a phosphorylated active-site intermediate. This chain is Nucleoside diphosphate kinase, found in Chlamydia caviae (strain ATCC VR-813 / DSM 19441 / 03DC25 / GPIC) (Chlamydophila caviae).